Here is a 334-residue protein sequence, read N- to C-terminus: Holliday junction branch migration complex subunit RuvB (334 aa).

The interval 4-184 (ADRLISAAVI…FGIVQRLEFY (181 aa)) is large ATPase domain (RuvB-L). ATP is bound by residues Ile23, Arg24, Gly65, Lys68, Thr69, Thr70, 131–133 (EDY), Arg174, Tyr184, and Arg221. Position 69 (Thr69) interacts with Mg(2+). The small ATPAse domain (RuvB-S) stretch occupies residues 185–255 (QVADLEHIVS…VAMKALDMLN (71 aa)). The tract at residues 258–334 (AEGFDFMDRK…YKHFGITREE (77 aa)) is head domain (RuvB-H). Residues Arg294, Arg313, and Arg318 each contribute to the DNA site.

The protein belongs to the RuvB family. As to quaternary structure, homohexamer. Forms an RuvA(8)-RuvB(12)-Holliday junction (HJ) complex. HJ DNA is sandwiched between 2 RuvA tetramers; dsDNA enters through RuvA and exits via RuvB. An RuvB hexamer assembles on each DNA strand where it exits the tetramer. Each RuvB hexamer is contacted by two RuvA subunits (via domain III) on 2 adjacent RuvB subunits; this complex drives branch migration. In the full resolvosome a probable DNA-RuvA(4)-RuvB(12)-RuvC(2) complex forms which resolves the HJ.

The protein resides in the cytoplasm. It carries out the reaction ATP + H2O = ADP + phosphate + H(+). The RuvA-RuvB-RuvC complex processes Holliday junction (HJ) DNA during genetic recombination and DNA repair, while the RuvA-RuvB complex plays an important role in the rescue of blocked DNA replication forks via replication fork reversal (RFR). RuvA specifically binds to HJ cruciform DNA, conferring on it an open structure. The RuvB hexamer acts as an ATP-dependent pump, pulling dsDNA into and through the RuvAB complex. RuvB forms 2 homohexamers on either side of HJ DNA bound by 1 or 2 RuvA tetramers; 4 subunits per hexamer contact DNA at a time. Coordinated motions by a converter formed by DNA-disengaged RuvB subunits stimulates ATP hydrolysis and nucleotide exchange. Immobilization of the converter enables RuvB to convert the ATP-contained energy into a lever motion, pulling 2 nucleotides of DNA out of the RuvA tetramer per ATP hydrolyzed, thus driving DNA branch migration. The RuvB motors rotate together with the DNA substrate, which together with the progressing nucleotide cycle form the mechanistic basis for DNA recombination by continuous HJ branch migration. Branch migration allows RuvC to scan DNA until it finds its consensus sequence, where it cleaves and resolves cruciform DNA. In Yersinia pseudotuberculosis serotype O:1b (strain IP 31758), this protein is Holliday junction branch migration complex subunit RuvB.